The chain runs to 148 residues: Ribonuclease H (148 aa).

An RNase H type-1 domain is found at 3–144 (DKEQVVIYTD…ADQLANRGVA (142 aa)). The Mg(2+) site is built by aspartate 12, glutamate 50, aspartate 72, and aspartate 136. The segment at 125-148 (GHTGDPGNERADQLANRGVAELPR) is disordered.

This sequence belongs to the RNase H family. Monomer. Mg(2+) serves as cofactor.

The protein localises to the cytoplasm. It carries out the reaction Endonucleolytic cleavage to 5'-phosphomonoester.. Endonuclease that specifically degrades the RNA of RNA-DNA hybrids. This is Ribonuclease H from Pseudomonas paraeruginosa (strain DSM 24068 / PA7) (Pseudomonas aeruginosa (strain PA7)).